Here is a 71-residue protein sequence, read N- to C-terminus: uncharacterized protein (71 aa).

Positions 23–71 (ENEKAGQSEEYDDDDKEENKKRRRNNGRRGPPEKKKSRRGGEEQTQRII) are disordered. Residues 52–71 (GPPEKKKSRRGGEEQTQRII) are compositionally biased toward basic and acidic residues.

This is an uncharacterized protein from Caenorhabditis elegans.